A 616-amino-acid polypeptide reads, in one-letter code: UvrABC system protein C (616 aa).

The GIY-YIG domain maps to Glu-12–Ile-91. Positions Ser-202–Met-237 constitute a UVR domain.

Belongs to the UvrC family. As to quaternary structure, interacts with UvrB in an incision complex.

The protein localises to the cytoplasm. In terms of biological role, the UvrABC repair system catalyzes the recognition and processing of DNA lesions. UvrC both incises the 5' and 3' sides of the lesion. The N-terminal half is responsible for the 3' incision and the C-terminal half is responsible for the 5' incision. The polypeptide is UvrABC system protein C (Gemmatimonas aurantiaca (strain DSM 14586 / JCM 11422 / NBRC 100505 / T-27)).